We begin with the raw amino-acid sequence, 359 residues long: Peptide methionine sulfoxide reductase MsrA/MsrB (359 aa).

Positions 36–189 (RVIYLAGGCF…PGGYCHIDLK (154 aa)) are peptide methionine sulfoxide reductase A. Cys-44 is an active-site residue. In terms of domain architecture, MsrB spans 206–329 (DEVLKKKLTK…NSAALRFIPL (124 aa)). The Nucleophile role is filled by Cys-318.

In the N-terminal section; belongs to the MsrA Met sulfoxide reductase family. It in the C-terminal section; belongs to the MsrB Met sulfoxide reductase family.

The enzyme catalyses L-methionyl-[protein] + [thioredoxin]-disulfide + H2O = L-methionyl-(S)-S-oxide-[protein] + [thioredoxin]-dithiol. The catalysed reaction is [thioredoxin]-disulfide + L-methionine + H2O = L-methionine (S)-S-oxide + [thioredoxin]-dithiol. It catalyses the reaction L-methionyl-[protein] + [thioredoxin]-disulfide + H2O = L-methionyl-(R)-S-oxide-[protein] + [thioredoxin]-dithiol. Functionally, has an important function as a repair enzyme for proteins that have been inactivated by oxidation. Catalyzes the reversible oxidation-reduction of methionine sulfoxide in proteins to methionine. This is Peptide methionine sulfoxide reductase MsrA/MsrB (msrAB) from Helicobacter pylori (strain J99 / ATCC 700824) (Campylobacter pylori J99).